A 356-amino-acid polypeptide reads, in one-letter code: Dihydroorotate dehydrogenase (quinone) (356 aa).

Residues 67 to 71 (PGFDK) and Thr-91 contribute to the FMN site. Lys-71 provides a ligand contact to substrate. Residue 116–120 (NRMGF) coordinates substrate. FMN-binding residues include Asn-147 and Asn-178. Position 178 (Asn-178) interacts with substrate. The Nucleophile role is filled by Ser-181. Position 183 (Asn-183) interacts with substrate. Positions 218 and 246 each coordinate FMN. 247–248 (NT) contacts substrate. Residues Gly-268, Gly-297, and 318-319 (YS) contribute to the FMN site.

It belongs to the dihydroorotate dehydrogenase family. Type 2 subfamily. As to quaternary structure, monomer. It depends on FMN as a cofactor.

It is found in the cell membrane. The catalysed reaction is (S)-dihydroorotate + a quinone = orotate + a quinol. It functions in the pathway pyrimidine metabolism; UMP biosynthesis via de novo pathway; orotate from (S)-dihydroorotate (quinone route): step 1/1. In terms of biological role, catalyzes the conversion of dihydroorotate to orotate with quinone as electron acceptor. This chain is Dihydroorotate dehydrogenase (quinone), found in Sphingopyxis alaskensis (strain DSM 13593 / LMG 18877 / RB2256) (Sphingomonas alaskensis).